A 109-amino-acid chain; its full sequence is Parvalbumin, thymic (109 aa).

Ala-2 is subject to N-acetylalanine. EF-hand domains are found at residues 39–74 (KTPD…FSSS) and 78–109 (LTSA…LVKA). Positions 52, 54, 56, 63, 91, 93, 95, 97, and 102 each coordinate Ca(2+).

The protein belongs to the parvalbumin family.

Functionally, appears to promote immune maturation in bone marrow cells in culture. Binds two calcium ions. This is Parvalbumin, thymic from Gallus gallus (Chicken).